A 543-amino-acid chain; its full sequence is DM7 family protein GG19680 (543 aa).

Basic and acidic residues predominate over residues 415-430 (GETQEMDEAHPTKEES). A disordered region spans residues 415 to 443 (GETQEMDEAHPTKEESKSEEEGEVQSGSQ).

It belongs to the DM7 family.

This chain is DM7 family protein GG19680, found in Drosophila erecta (Fruit fly).